The primary structure comprises 433 residues: Signal recognition particle 54 kDa protein (433 aa).

Residues 100–107 (GLQGSGKT), 180–184 (DTAGR), and 238–241 (TKFD) contribute to the GTP site.

It belongs to the GTP-binding SRP family. SRP54 subfamily. In terms of assembly, part of the signal recognition particle protein translocation system, which is composed of SRP and FtsY. Archaeal SRP consists of a 7S RNA molecule of 300 nucleotides and two protein subunits: SRP54 and SRP19.

It localises to the cytoplasm. The catalysed reaction is GTP + H2O = GDP + phosphate + H(+). Its function is as follows. Involved in targeting and insertion of nascent membrane proteins into the cytoplasmic membrane. Binds to the hydrophobic signal sequence of the ribosome-nascent chain (RNC) as it emerges from the ribosomes. The SRP-RNC complex is then targeted to the cytoplasmic membrane where it interacts with the SRP receptor FtsY. The chain is Signal recognition particle 54 kDa protein from Archaeoglobus fulgidus (strain ATCC 49558 / DSM 4304 / JCM 9628 / NBRC 100126 / VC-16).